The sequence spans 1119 residues: MGDPVSSKRKSSVSDAVSTSKRQHQQVKVEDVNVPLSSREHSPGPQLHTQQSYYGNGTDGASESALTQSRNNNGATSVVAISDATQNGEDSSNISNNSNAVSKGKAVVNAGHRPVTSCTHCRQHKIKCNASEKFPAPCSRCERMGLHCEIDPQFRPKKGSQLQSLRNDVDELKVKIEYLTRNESLIAKALKQSNIGQNLLQAIKSVDFSYRVAGPTQGQVAKNKISVQTYLTNEPQLLQDSQTTTTNPTTSSNSKVVTPTGSDHSPASHNGGSLSSGKPQLLNDSVPANTKDRLPPVLQIALKRLSQQISSSSPQNSSPTTTGHSPANDLSSSKQHVVATTNAMPLLPSPHANIDEFVLGDVHISIEKATELHNIFVARFLPYFPIMQSNSATELYSQSQLLFWTVILTASLSDPEPTLYNKLSSLIKQLAIETCWIRTPRSTHISQALLILCNWPLPNQKVLDDCSYRFVGLAKSLSFQLGLHRGKFMTEFTRTQTSLPEAEKWRTRTWLGIFFAEQLWASILGLPPTSQTDYLIEKARLGDDGELPPILRKLICLANFQGKLCNVMGTSVVSPDGLMDARERAGSLAILERELERLDVKLKFQEDAAVEIYFLYIKLMICCFAFLPETPTEDQTKYVTEAYLCATKIITLLTKLLETQQLIELPIYIRHSATYSALILFKLYLTPLLLDKYVDSARQSIVTVHRLYRNQLTAWAASVENDISRTASVLEKLNFVLVTHPEVFIEEEGIISRMRSHLTGTLFYDLVWCVHEARRRQMDPNYDAEAAKRNKEKWFKNRRKLYPLPFYNQISKEDFETITQTTPGGTTVTTLVPTKSAIKQAKQLAQSQGDQNGPVTHINGIPLSMLDETGSVNIEGLLANANLNLSNEHSTVLASSSSTATRLNADNPTTDTNKFNVQTVFTHNIKKSSKSSDTPTNKPKFNSTSSIPTATPTSEQRAAHNTKTSASILTGDPNSLFSMNNSLQANIQLNKTLSADSNGTSNNNIPNSTAPLNTPDTNSFNSLTRSPDAPSYGNMNVFYNAANQGTNMNTLYSQSVPNAPQGISAPLSAQPVNVTNIPNGNVNSELDDFFLRQSAGWIEGNSSNDDFLGWFDMNMAPEF.

2 disordered regions span residues 1–70 (MGDP…TQSR) and 86–105 (QNGE…SKGK). Residues 47–70 (LHTQQSYYGNGTDGASESALTQSR) are compositionally biased toward polar residues. Positions 118–148 (CTHCRQHKIKCNASEKFPAPCSRCERMGLHC) form a DNA-binding region, zn(2)-C6 fungal-type. Disordered stretches follow at residues 236–290 (QLLQ…PANT), 306–335 (SQQI…SSKQ), 894–913 (ASSS…TDTN), 926–962 (KKSS…AHNT), and 994–1018 (SADS…PDTN). Residues 243-260 (TTTTNPTTSSNSKVVTPT) show a composition bias toward low complexity. A compositionally biased stretch (polar residues) spans 261 to 288 (GSDHSPASHNGGSLSSGKPQLLNDSVPA). The segment covering 306–322 (SQQISSSSPQNSSPTTT) has biased composition (low complexity). Composition is skewed to polar residues over residues 323–335 (GHSP…SSKQ), 902–913 (RLNADNPTTDTN), and 931–942 (SSDTPTNKPKFN). The span at 943-954 (STSSIPTATPTS) shows a compositional bias: low complexity.

It is found in the nucleus. Functionally, putative transcription factor. Suppresses the lethal phenotype of RPM2 deletion. In Kluyveromyces lactis (strain ATCC 8585 / CBS 2359 / DSM 70799 / NBRC 1267 / NRRL Y-1140 / WM37) (Yeast), this protein is Putative transcription factor SEF1 (SEF1).